Consider the following 536-residue polypeptide: Formate--tetrahydrofolate ligase (536 aa).

51-58 (TPAGEGKT) contacts ATP.

It belongs to the formate--tetrahydrofolate ligase family.

It carries out the reaction (6S)-5,6,7,8-tetrahydrofolate + formate + ATP = (6R)-10-formyltetrahydrofolate + ADP + phosphate. The protein operates within one-carbon metabolism; tetrahydrofolate interconversion. The polypeptide is Formate--tetrahydrofolate ligase (Thermoplasma acidophilum (strain ATCC 25905 / DSM 1728 / JCM 9062 / NBRC 15155 / AMRC-C165)).